Reading from the N-terminus, the 347-residue chain is MDYKTSGVDIEAGREFVSEIKQAVEATHTSNVIEGIGGFGGLFRIPIDSFKKPVLVSGTDGVGTKLELAQSKNFHFEVGIDLVAMCMNDIITSGARPLFFLDYIATGKLDKKQLLRVVQGISHGCGENNCSLLGGETAEMPGFYSKNKYDLAGFCVGIVDEDKLINGKKVSENDLIIALKSNGVHSNGFSLVRKIIQNNNQIDKEFEKVSHLNFYDELLKPTKIYNNVINQMLSEDIEIKAMSHITGGGIPENLPRCIPSDFIPYINTSSWQIPTLFKFLKEKGSIPERDFWNTFNLGVGFCLIIDKQFKDAILSICKDYGIDSWEIGKIVRKNDSTISKFLPEILT.

The protein belongs to the AIR synthase family.

Its subcellular location is the cytoplasm. It carries out the reaction 2-formamido-N(1)-(5-O-phospho-beta-D-ribosyl)acetamidine + ATP = 5-amino-1-(5-phospho-beta-D-ribosyl)imidazole + ADP + phosphate + H(+). Its pathway is purine metabolism; IMP biosynthesis via de novo pathway; 5-amino-1-(5-phospho-D-ribosyl)imidazole from N(2)-formyl-N(1)-(5-phospho-D-ribosyl)glycinamide: step 2/2. This chain is Phosphoribosylformylglycinamidine cyclo-ligase, found in Prochlorococcus marinus (strain MIT 9301).